The following is a 152-amino-acid chain: Ubiquitin-conjugating enzyme E2 W (152 aa).

A Peptide (Met-Gly) (interchain with G-Cter in ubiquitin) cross-link involves residue Met-1. One can recognise a UBC core domain in the interval 4–152 (AATRRLMKEL…TRWWFHDDSV (149 aa)). Cys-92 acts as the Glycyl thioester intermediate in catalysis.

Belongs to the ubiquitin-conjugating enzyme family.

The catalysed reaction is S-ubiquitinyl-[E1 ubiquitin-activating enzyme]-L-cysteine + [E2 ubiquitin-conjugating enzyme]-L-cysteine = [E1 ubiquitin-activating enzyme]-L-cysteine + S-ubiquitinyl-[E2 ubiquitin-conjugating enzyme]-L-cysteine.. It carries out the reaction S-ubiquitinyl-[E1 ubiquitin-activating enzyme]-L-cysteine + [acceptor protein]-N-terminal-amino acid = [E1 ubiquitin-activating enzyme]-L-cysteine + N-terminal-ubiquitinyl-[acceptor protein].. It participates in protein modification; protein ubiquitination. Its function is as follows. Accepts ubiquitin from the E1 complex and catalyzes its covalent attachment to other proteins. Together with ubc-18, required for the ubiquitination of membranous organelles, and the removal of paternal mitochondria from early embryos. The chain is Ubiquitin-conjugating enzyme E2 W from Caenorhabditis elegans.